The sequence spans 389 residues: S-adenosylmethionine synthase (389 aa).

Residue histidine 17 participates in ATP binding. Aspartate 19 contributes to the Mg(2+) binding site. Glutamate 45 lines the K(+) pocket. Residues glutamate 58 and glutamine 101 each contribute to the L-methionine site. Positions 101 to 111 (QSPDIAQGVNP) are flexible loop. ATP contacts are provided by residues 168–170 (DGK), 234–235 (RF), aspartate 243, 249–250 (RK), and lysine 270. Aspartate 243 is a binding site for L-methionine. Residue lysine 274 coordinates L-methionine.

It belongs to the AdoMet synthase family. Homotetramer; dimer of dimers. It depends on Mg(2+) as a cofactor. Requires K(+) as cofactor.

The protein resides in the cytoplasm. It carries out the reaction L-methionine + ATP + H2O = S-adenosyl-L-methionine + phosphate + diphosphate. It functions in the pathway amino-acid biosynthesis; S-adenosyl-L-methionine biosynthesis; S-adenosyl-L-methionine from L-methionine: step 1/1. In terms of biological role, catalyzes the formation of S-adenosylmethionine (AdoMet) from methionine and ATP. The overall synthetic reaction is composed of two sequential steps, AdoMet formation and the subsequent tripolyphosphate hydrolysis which occurs prior to release of AdoMet from the enzyme. This chain is S-adenosylmethionine synthase, found in Syntrophobacter fumaroxidans (strain DSM 10017 / MPOB).